A 150-amino-acid polypeptide reads, in one-letter code: UPF0260 protein CGSHiGG_00425 (150 aa).

This sequence belongs to the UPF0260 family.

This is UPF0260 protein CGSHiGG_00425 from Haemophilus influenzae (strain PittGG).